The following is a 393-amino-acid chain: Putative odorant receptor 69a, isoform B (393 aa).

The Cytoplasmic portion of the chain corresponds to 1–39; sequence MQLEDFMRYPDLVCQAAQLPRYTWNGRRSLEVKRNLAKR. A helical transmembrane segment spans residues 40–60; the sequence is IIFWLGAVNLVYHNIGCVMYG. Residues 61–69 lie on the Extracellular side of the membrane; sequence YFGDGRTKD. The helical transmembrane segment at 70 to 90 threads the bilayer; sequence PIAYLAELASVASMLGFTIVG. Topologically, residues 91-138 are cytoplasmic; that stretch reads TLNLWKMLSLKTHFENLLNEFEELFQLIKHRAYRIHHYQEKYTRHIRN. Residues 139–159 traverse the membrane as a helical segment; sequence TFIFHTSAVVYYNSLPILLMI. At 160–208 the chain is on the extracellular side; the sequence is REHFSNSQQLGYRIQSNTWYPWQVQGSIPGFFAAVACQIFSCQTNMCVN. The chain crosses the membrane as a helical span at residues 209–229; that stretch reads MFIQFLINFFGIQLEIHFDGL. At 230–269 the chain is on the cytoplasmic side; it reads ARQLETIDARNPHAKDQLKYLIVYHTKLLNLADRVNRSFN. A helical membrane pass occupies residues 270–290; it reads FTFLISLSVSMISNCFLAFSM. Topologically, residues 291 to 305 are extracellular; sequence TMFDFGTSLKHLLGL. A helical transmembrane segment spans residues 306–326; sequence LLFITYNFSMCRSGTHLILTS. Over 327–365 the chain is Cytoplasmic; that stretch reads GKVLPAAFYNNWYEGDLVYRRMLLILMMRATKPYMWKTY. The chain crosses the membrane as a helical span at residues 366 to 386; that stretch reads KLAPVSITTYMATLKFSYQMF. Topologically, residues 387–393 are extracellular; it reads TCVRSLK.

The protein belongs to the insect chemoreceptor superfamily. Heteromeric odorant receptor channel (TC 1.A.69) family. Or49a subfamily. In terms of assembly, interacts with Orco. Complexes exist early in the endomembrane system in olfactory sensory neurons (OSNs), coupling these complexes to the conserved ciliary trafficking pathway. Expressed in olfactory sensory neurons in the antenna.

It localises to the cell membrane. Functionally, odorant receptor which mediates acceptance or avoidance behavior, depending on its substrates. The odorant receptor repertoire encodes a large collection of odor stimuli that vary widely in identity, intensity, and duration. May form a complex with Orco to form odorant-sensing units, providing sensitive and prolonged odorant signaling and calcium permeability. The sequence is that of Putative odorant receptor 69a, isoform B (Or69a) from Drosophila melanogaster (Fruit fly).